The chain runs to 354 residues: MKVAILGAGCYRTHAASGITNFSRASQVAKEAGIPEIAMTHSTITMGAELLHLIPEITEVVVSDPCFAEEPGMVVLDQFDYKAVMEAHLAGDAEKVMPEIREAVKAKAKETPKPPKGCIHFVHPETVGLKVTASDVEAVKDADIVITWLPKGGSQPAIIEKFASEIKKGAIVTHACTIPTPKFAKIFKDLGRDDLNIIAYHPGAVPEMKGQAFLSEGLADAEKVEEFYCMAKTARGEAFKMPANLISPVCDMGSAVTAPVYAAILAYRDAVTQILGAPADFAQMMADEAISQILDLMRNEGIKNMEDKLNPKALTGTADSMCFGPLADILPASLKVLEKHANENKCECGCSIKP.

Belongs to the HMD family.

It carries out the reaction 5,10-methenyl-5,6,7,8-tetrahydromethanopterin + H2 = 5,10-methylenetetrahydromethanopterin + H(+). It functions in the pathway one-carbon metabolism; methanogenesis from CO(2); 5,10-methylene-5,6,7,8-tetrahydromethanopterin from 5,10-methenyl-5,6,7,8-tetrahydromethanopterin (hydrogen route): step 1/1. Its function is as follows. Catalyzes the reversible reduction of methenyl-H(4)MPT(+) to methylene-H(4)MPT. The protein is 5,10-methenyltetrahydromethanopterin hydrogenase of Methanococcus maripaludis (strain DSM 14266 / JCM 13030 / NBRC 101832 / S2 / LL).